Here is a 407-residue protein sequence, read N- to C-terminus: Extracellular superoxide dismutase [Cu-Zn] 3 (407 aa).

Residues 1–19 (MRLLSVLVFLISVISIAKA) form the signal peptide. At 20–386 (DYQYAFCKFN…SESYNDNEPG (367 aa)) the chain is on the extracellular side. N-linked (GlcNAc...) asparagine glycans are attached at residues asparagine 51, asparagine 205, and asparagine 224. Residues histidine 245 and histidine 247 each coordinate Cu cation. An N-linked (GlcNAc...) asparagine glycan is attached at asparagine 256. Histidine 263 lines the Cu cation pocket. Zn(2+) is bound by residues histidine 263, histidine 271, histidine 280, and aspartate 283. Residue histidine 320 participates in Cu cation binding. N-linked (GlcNAc...) asparagine glycosylation is found at asparagine 321 and asparagine 364. A helical membrane pass occupies residues 387–406 (SSSTVIPFFALIIFSIIFAL). Residue leucine 407 is a topological domain, cytoplasmic.

Belongs to the Cu-Zn superoxide dismutase family. Cu cation serves as cofactor. Zn(2+) is required as a cofactor.

It is found in the cell membrane. It catalyses the reaction 2 superoxide + 2 H(+) = H2O2 + O2. Functionally, protect the extracellular space from toxic effect of reactive oxygen intermediates by converting superoxyde radicals into hydrogen peroxyde and oxygen. In Dictyostelium discoideum (Social amoeba), this protein is Extracellular superoxide dismutase [Cu-Zn] 3 (sodC).